An 83-amino-acid chain; its full sequence is Small ribosomal subunit protein uS19m (83 aa).

This sequence belongs to the universal ribosomal protein uS19 family.

It is found in the mitochondrion. This chain is Small ribosomal subunit protein uS19m (RPS19), found in Tetraselmis subcordiformis (Marine green alga).